We begin with the raw amino-acid sequence, 618 residues long: Sodium/iodide cotransporter (618 aa).

Topologically, residues 1-14 are extracellular; the sequence is MEGAEAGARATFGP. Residues 15 to 31 form a helical membrane-spanning segment; it reads WDYGVFATMLLVSTGIG. Over 32–56 the chain is Cytoplasmic; it reads LWVGLARGGQRSADDFFTGGRQLAA. Residues 57 to 80 form a discontinuously helical membrane-spanning segment; the sequence is VPVGLSLAASFMSAVQVLGVPAEA. Positions 69, 71, and 72 each coordinate Na(+). Position 76 (Val-76) interacts with iodide. Residues 81–84 lie on the Extracellular side of the membrane; the sequence is ARYG. The helical transmembrane segment at 85–105 threads the bilayer; the sequence is LKFLWMCVGQLLNSLLTALLF. Met-90 lines the iodide pocket. Residues 106–130 are Cytoplasmic-facing; it reads LPIFYRLGLTSTYQYLELRFSRAVR. A helical transmembrane segment spans residues 131–157; the sequence is LCGTLQYLVATMLYTGIVIYAPALILN. Tyr-144 is a binding site for Na(+). Residues 158-163 are Extracellular-facing; that stretch reads QVTGLD. A helical transmembrane segment spans residues 164–181; it reads IWASLLSTGIICTLYTTV. Residues 182–189 lie on the Cytoplasmic side of the membrane; the sequence is GGMKAVVW. Residues 190-208 form a helical membrane-spanning segment; the sequence is TDVFQVVVMLVGFWVILAR. Over 209-243 the chain is Extracellular; sequence GVMLMGGPWNVLSLAQNHSRINLMDFDPDPRSRYT. Residues 244–266 traverse the membrane as a discontinuously helical segment; that stretch reads FWTFVVGGSLVWLSMYGVNQAQV. An iodide-binding site is contributed by Trp-255. Met-258 contributes to the Na(+) binding site. Residues 267 to 278 are Cytoplasmic-facing; it reads QRYVACHTERKA. A helical transmembrane segment spans residues 279 to 301; that stretch reads KLALLVNQLGLFLIVASAACCGI. Topologically, residues 302–335 are extracellular; the sequence is VMFVYYKDCDPLLTGRIAAPDQYMPLLVLDIFED. Residues 336 to 363 traverse the membrane as a helical segment; the sequence is LPGVPGLFLACAYSGTLSTASTSINAMA. Residues 364–386 are Cytoplasmic-facing; it reads AVTVEDLIKPRMPSLAPRKLVFI. The helical transmembrane segment at 387-408 threads the bilayer; the sequence is SKGLSFIYGSTCLTVAALSSLL. The Extracellular portion of the chain corresponds to 409–411; the sequence is GGG. A helical transmembrane segment spans residues 412-437; it reads VLQGSFTVMGVISGPLLGAFTLGMLL. An iodide-binding site is contributed by Leu-413. 2 residues coordinate Na(+): Ser-416 and Phe-417. Phe-417 contacts iodide. Topologically, residues 438–441 are cytoplasmic; the sequence is PACN. Residues 442–465 form a helical membrane-spanning segment; that stretch reads TPGVLSGLTAGLAVSLWVAVGATL. At 466-520 the chain is on the extracellular side; it reads YPPGEQTMGVLPTSAAGCTNASVLPSPPGAANTSRGIPSSGMDSGRPAFADTFYA. 2 N-linked (GlcNAc...) asparagine glycosylation sites follow: Asn-485 and Asn-497. The chain crosses the membrane as a helical span at residues 521–545; sequence VSYLYYGALGTLTTMLCGALISYLT. Residues 546–618 are Cytoplasmic-facing; the sequence is GPTKRSSLGP…YLGHDVETNL (73 aa). Ser-551 carries the phosphoserine; by PKA modification. Positions 571–587 are enriched in basic and acidic residues; that stretch reads PKEDTTTLEDSLVKGPE. The interval 571-618 is disordered; the sequence is PKEDTTTLEDSLVKGPEDIPAATKKPPGFRPEAETHPLYLGHDVETNL.

Belongs to the sodium:solute symporter (SSF) (TC 2.A.21) family. In terms of assembly, monomer. Glycosylated.

The protein localises to the cell membrane. The protein resides in the cytoplasm. The catalysed reaction is iodide(out) + 2 Na(+)(out) = iodide(in) + 2 Na(+)(in). It carries out the reaction chlorate(out) + 2 Na(+)(out) = chlorate(in) + 2 Na(+)(in). It catalyses the reaction thiocyanate(out) + 2 Na(+)(out) = thiocyanate(in) + 2 Na(+)(in). The enzyme catalyses nitrate(out) + 2 Na(+)(out) = nitrate(in) + 2 Na(+)(in). The catalysed reaction is selenocyanate(out) + 2 Na(+)(out) = selenocyanate(in) + 2 Na(+)(in). With respect to regulation, perchlorate inhibits iodide transport activity. Oxyanions inhibit iodide transport activity by blocking the binding sites for iodide and one of the sodium ions. Functionally, sodium:iodide symporter that mediates the transport of iodide into the thyroid gland. Can also mediate the transport of chlorate, thiocynate, nitrate and selenocynate. The chain is Sodium/iodide cotransporter (Slc5a5) from Mus musculus (Mouse).